The following is a 362-amino-acid chain: Probable protein phosphatase 2C 24 (362 aa).

The region spanning 77–360 (RYGVSSVCGR…DNVSVVVIDL (284 aa)) is the PPM-type phosphatase domain. Residues Asp-117, Gly-118, Asp-295, and Asp-351 each contribute to the Mn(2+) site.

This sequence belongs to the PP2C family. It depends on Mg(2+) as a cofactor. Requires Mn(2+) as cofactor.

It carries out the reaction O-phospho-L-seryl-[protein] + H2O = L-seryl-[protein] + phosphate. The enzyme catalyses O-phospho-L-threonyl-[protein] + H2O = L-threonyl-[protein] + phosphate. The chain is Probable protein phosphatase 2C 24 from Arabidopsis thaliana (Mouse-ear cress).